Reading from the N-terminus, the 58-residue chain is UPF0337 protein OB2685 (58 aa).

2 stretches are compositionally biased toward basic and acidic residues: residues 1–22 (MSDGMKDKAKAIGKKIKGEAKD) and 30–46 (DPQRKAEGKRDKAKGEA). Positions 1 to 58 (MSDGMKDKAKAIGKKIKGEAKDQWGSATDDPQRKAEGKRDKAKGEAQDTIADAKNNNK) are disordered.

This sequence belongs to the UPF0337 (CsbD) family.

The chain is UPF0337 protein OB2685 from Oceanobacillus iheyensis (strain DSM 14371 / CIP 107618 / JCM 11309 / KCTC 3954 / HTE831).